A 299-amino-acid polypeptide reads, in one-letter code: Tricarboxylate transport protein (299 aa).

Solcar repeat units follow at residues 10-97 (VDPL…IKDM), 109-199 (TRGV…IKTL), and 212-297 (LSSG…VLVM). 6 helical membrane passes run 16–36 (FLAG…FEFA), 66–86 (IGSI…KAGI), 113–133 (IAGL…FEAI), 174–193 (GVLP…LGCY), 215–235 (GLTF…TMPL), and 272–291 (GATP…FTIY).

Belongs to the mitochondrial carrier (TC 2.A.29) family.

It localises to the mitochondrion inner membrane. Its function is as follows. Transport of citrate across inner mitochondrial membrane. This chain is Tricarboxylate transport protein (CTP1), found in Saccharomyces cerevisiae (strain ATCC 204508 / S288c) (Baker's yeast).